The primary structure comprises 327 residues: MGGMKSCYHEPVLAPESVSMLVRGPGLYLDGTLGGGGHSLAILCELERSGWLEGSLLLGIDQDDEALQEAGERLADYREHAVALKGNFGNIAALSAREAGSRGMEPQASGILLDLGVSSHQLDVPLRGFSYMQPGPLDMRMDSGATGTAADILNTAPEAELASIFFRYGEEPLSRVIARAVTTRRVEKGPFHTTDELADLVRSVVFGRERVMKSLSRVFQALRIAVNQELEVLERVLGDGVMLLKPGGRMAVISYHSLEDRMVKRFFSSLTTADWGPKGVGLREPVRPAAAIAVTGKPVRAGAEEVARNPRARSAKMRVIEKMENRE.

Residues 36–38 (GGH), Asp61, Phe88, Asp114, and Gln121 each bind S-adenosyl-L-methionine.

This sequence belongs to the methyltransferase superfamily. RsmH family.

It is found in the cytoplasm. The catalysed reaction is cytidine(1402) in 16S rRNA + S-adenosyl-L-methionine = N(4)-methylcytidine(1402) in 16S rRNA + S-adenosyl-L-homocysteine + H(+). Its function is as follows. Specifically methylates the N4 position of cytidine in position 1402 (C1402) of 16S rRNA. This chain is Ribosomal RNA small subunit methyltransferase H, found in Chlorobium phaeovibrioides (strain DSM 265 / 1930) (Prosthecochloris vibrioformis (strain DSM 265)).